Reading from the N-terminus, the 328-residue chain is Stress response kinase A (328 aa).

Aspartate 201 serves as the catalytic Proton acceptor. Positions 206 and 217 each coordinate Mg(2+). Residue aspartate 217 is part of the active site.

The protein belongs to the SrkA/RdoA protein kinase family. As to quaternary structure, monomer. Mg(2+) serves as cofactor.

It localises to the cytoplasm. The enzyme catalyses L-seryl-[protein] + ATP = O-phospho-L-seryl-[protein] + ADP + H(+). It carries out the reaction L-threonyl-[protein] + ATP = O-phospho-L-threonyl-[protein] + ADP + H(+). Its function is as follows. A protein kinase that phosphorylates Ser and Thr residues. Probably acts to suppress the effects of stress linked to accumulation of reactive oxygen species. Probably involved in the extracytoplasmic stress response. In Escherichia coli O157:H7, this protein is Stress response kinase A.